The following is a 67-amino-acid chain: Preprofallaxidin-1 (67 aa).

An N-terminal signal peptide occupies residues 1 to 22 (MASLKKSLFLVLFLGMVSLSIC). A propeptide spanning residues 23 to 46 (DKEKREGENEEEEEEHEEESEEKR) is cleaved from the precursor. Residues 24–46 (KEKREGENEEEEEEHEEESEEKR) form a disordered region. Residues 30 to 42 (ENEEEEEEHEEES) are compositionally biased toward acidic residues.

In terms of tissue distribution, expressed by the skin glands.

The protein localises to the secreted. Fallaxidin-4.1 shows antibacterial activity against the Gram-positive bacteria L.lactis (MIC=12 uM), M.luteus (MIC=100 uM), S.epidermidis (MIC=100 uM) and S.uberis (MIC=50 uM). No antibacterial activity against the Gram-positive bacteria B.cereus, E.faecalis, L.innocua, S.aureus, or the Gram-negative bacteria E.cloacae and E.coli. Inhibits the formation of NO by neuronal nitric oxide synthase with an IC(50) of 13.3 uM. This Litoria fallax (Eastern dwarf tree frog) protein is Preprofallaxidin-1.